The chain runs to 196 residues: Carnitine operon protein CaiE (196 aa).

The disordered stretch occupies residues 173-196; sequence TQPLRQMEENRPRLQGTTDVTPKR. The span at 187 to 196 shows a compositional bias: polar residues; it reads QGTTDVTPKR.

The protein belongs to the transferase hexapeptide repeat family.

Its pathway is amine and polyamine metabolism; carnitine metabolism. In terms of biological role, overproduction of CaiE stimulates the activity of CaiB and CaiD. This Escherichia coli O7:K1 (strain IAI39 / ExPEC) protein is Carnitine operon protein CaiE.